A 561-amino-acid polypeptide reads, in one-letter code: SH3 domain-binding protein 2 (561 aa).

The PH domain occupies 26–130; sequence GVAKAGYLHK…WMALLRREIG (105 aa). Disordered regions lie at residues 160–316 and 333–451; these read VDIS…GACS and KLKS…YEKV. Acidic residues predominate over residues 170-188; that stretch reads DNEDYEHDDEDDSYLEPDS. A phosphotyrosine; by SYK mark is found at Tyr-174 and Tyr-183. The short motif at 201-210 is the SH3-binding element; sequence PPAYPPPPVP. Pro residues-rich tracts occupy residues 202–213 and 233–242; these read PAYPPPPVPTPR and PLLPPPPPKH. A compositionally biased stretch (basic and acidic residues) spans 252 to 266; that stretch reads EDSKRDPLCPRRAEP. Residue Ser-278 is modified to Phosphoserine. Residues 342-354 are compositionally biased toward pro residues; sequence RGPPTSEPPPVPA. Ser-416 and Ser-427 each carry phosphoserine. Tyr-448 is subject to Phosphotyrosine; by SYK. One can recognise an SH2 domain in the interval 457–555; that stretch reads VFVNTTESCE…HQSLLLRHPY (99 aa).

In terms of processing, phosphorylated. Phosphorylation at Tyr-448 may stimulate the activity of the LYN kinase. Expressed in a variety of tissues including lung, liver, skeletal muscle, kidney and pancreas.

Functionally, binds differentially to the SH3 domains of certain proteins of signal transduction pathways. Binds to phosphatidylinositols; linking the hemopoietic tyrosine kinase fes to the cytoplasmic membrane in a phosphorylation dependent mechanism. The sequence is that of SH3 domain-binding protein 2 (SH3BP2) from Homo sapiens (Human).